The primary structure comprises 51 residues: Glutamine synthetase (51 aa).

Belongs to the glutamine synthetase family. In terms of assembly, homooctamer.

It localises to the cytoplasm. It catalyses the reaction L-glutamate + NH4(+) + ATP = L-glutamine + ADP + phosphate + H(+). The protein is Glutamine synthetase of Vitis sp. (Grape).